The chain runs to 215 residues: Putative ribosome biogenesis protein slx9-like (215 aa).

3 disordered regions span residues 49 to 121 (IIPS…GLGM), 133 to 157 (DSMK…MSLK), and 189 to 215 (LQNQ…LKRK).

This sequence belongs to the SLX9 family.

It is found in the nucleus. The protein localises to the nucleolus. Involved in ribosome biogenesis. The polypeptide is Putative ribosome biogenesis protein slx9-like (Dictyostelium discoideum (Social amoeba)).